Reading from the N-terminus, the 224-residue chain is uncharacterized protein (224 aa).

In terms of domain architecture, ABC transporter spans 2-221 (IEAKNVWKIY…KLRDGEIVEI (220 aa)). Residue 38-45 (GPSGCGKS) coordinates ATP.

Belongs to the ABC transporter superfamily.

This is an uncharacterized protein from Methanocaldococcus jannaschii (strain ATCC 43067 / DSM 2661 / JAL-1 / JCM 10045 / NBRC 100440) (Methanococcus jannaschii).